Consider the following 329-residue polypeptide: NADH-quinone oxidoreductase subunit H (329 aa).

Helical transmembrane passes span L9 to I29, G42 to F62, F75 to I95, I117 to G137, I154 to V174, G188 to A208, L238 to I258, W269 to W291, and W309 to I329.

It belongs to the complex I subunit 1 family. NDH-1 is composed of 14 different subunits. Subunits NuoA, H, J, K, L, M, N constitute the membrane sector of the complex.

It is found in the cell inner membrane. The catalysed reaction is a quinone + NADH + 5 H(+)(in) = a quinol + NAD(+) + 4 H(+)(out). Its function is as follows. NDH-1 shuttles electrons from NADH, via FMN and iron-sulfur (Fe-S) centers, to quinones in the respiratory chain. The immediate electron acceptor for the enzyme in this species is believed to be ubiquinone. Couples the redox reaction to proton translocation (for every two electrons transferred, four hydrogen ions are translocated across the cytoplasmic membrane), and thus conserves the redox energy in a proton gradient. This subunit may bind ubiquinone. In Helicobacter pylori (strain J99 / ATCC 700824) (Campylobacter pylori J99), this protein is NADH-quinone oxidoreductase subunit H.